We begin with the raw amino-acid sequence, 215 residues long: Methylosome subunit pICln (215 aa).

Disordered regions lie at residues 88–120 (GDPP…DEDD) and 160–215 (HPDS…DADE). Composition is skewed to acidic residues over residues 105–120 (AEVD…DEDD), 167–190 (DSED…EDDA), and 203–215 (LDDD…DADE).

Belongs to the pICln (TC 1.A.47) family. As to quaternary structure, component of the methylosome, a 20S complex containing at least CLNS1A/pICln, PRMT5/SKB1 and WDR77/MEP50; may mediate SNRPD1 and SNRPD3 methylation. Forms a 6S pICln-Sm complex composed of CLNS1A/pICln, SNRPD1, SNRPD2, SNRPE, SNRPF and SNRPG; ring-like structure where CLNS1A/pICln mimics additional Sm proteins and which is unable to assemble into the core snRNP.

The protein resides in the cytoplasm. Its subcellular location is the cytosol. It is found in the nucleus. It localises to the cytoskeleton. Its function is as follows. Involved in both the assembly of spliceosomal snRNPs and the methylation of Sm proteins. Chaperone that regulates the assembly of spliceosomal U1, U2, U4 and U5 small nuclear ribonucleoproteins (snRNPs), the building blocks of the spliceosome, and thereby plays an important role in the splicing of cellular pre-mRNAs. Most spliceosomal snRNPs contain a common set of Sm proteins SNRPB, SNRPD1, SNRPD2, SNRPD3, SNRPE, SNRPF and SNRPG that assemble in a heptameric protein ring on the Sm site of the small nuclear RNA to form the core snRNP (Sm core). In the cytosol, the Sm proteins SNRPD1, SNRPD2, SNRPE, SNRPF and SNRPG are trapped in an inactive 6S pICln-Sm complex by the chaperone CLNS1A that controls the assembly of the core snRNP. Dissociation by the SMN complex of CLNS1A from the trapped Sm proteins and their transfer to an SMN-Sm complex triggers the assembly of core snRNPs and their transport to the nucleus. The protein is Methylosome subunit pICln (icln) of Drosophila melanogaster (Fruit fly).